Here is a 966-residue protein sequence, read N- to C-terminus: Dynamin-like GTPase OPA1, mitochondrial (966 aa).

Residues 1–86 constitute a mitochondrion transit peptide; that stretch reads MLRAGSVVTC…GGHGYQQHRT (86 aa). At 87-95 the chain is on the mitochondrial matrix side; sequence FWVARLAAR. The chain crosses the membrane as a helical span at residues 96-112; the sequence is LLKLRYILLGSAVGGGY. The Mitochondrial intermembrane portion of the chain corresponds to 113–776; it reads TAKKTYDEWK…SVIADMVGPD (664 aa). Positions 189–217 are disordered; that stretch reads ESALRAPDVPPASAAMADSGDKQFKKSSD. Basic and acidic residues predominate over residues 207–217; that stretch reads SGDKQFKKSSD. The stretch at 213–259 forms a coiled coil; that stretch reads KKSSDKEKVDQLQEELLRTQLKYQRMLERLEKENKELRKVVLQKDDK. Residues 291–567 form the Dynamin-type G domain; sequence QDHLPRVVVV…FWKMVRESVE (277 aa). The G1 motif stretch occupies residues 301–308; it reads GDQSAGKT. 6 residues coordinate GTP: S304, G306, K307, T308, S309, and G323. T308 serves as a coordination point for Mg(2+). Residues 327–330 are G2 motif; the sequence is MMTR. Residues T329 and D404 each coordinate Mg(2+). The tract at residues 404-407 is G3 motif; it reads DLPG. Residues 473–476 form a G4 motif region; that stretch reads TKVD. Residues K474, D476, and T509 each coordinate GTP. Residues 507-510 form a G5 motif region; that stretch reads VVTG. Stalk region stretches follow at residues 595-842 and 880-934; these read DRNE…IKDT and CNDV…VQLI. Residues 742 to 862 form a paddle region region; the sequence is TDKPQWDAAI…QKALLHCNLC (121 aa). The stretch at 777-787 is an intramembrane region; sequence WKQRWMSWKNR. Residues 788 to 966 are Mitochondrial intermembrane-facing; it reads TPEQHTRNET…AFIEALHKEK (179 aa). C862 and C880 form a disulfide bridge. Residues 901 to 966 adopt a coiled-coil conformation; that stretch reads RQQLTNTEVR…AFIEALHKEK (66 aa).

The protein belongs to the TRAFAC class dynamin-like GTPase superfamily. Dynamin/Fzo/YdjA family. Oligomeric complex consisting of membrane-bound and soluble forms of OPA1. Post-translationally, cleaved by OMA1 or YME1L downstream of the transmembrane region in response to different signals to generate soluble forms. Cleaved by OMA1 at position S1 following stress conditions, generating the short soluble form (Dynamin-like GTPase OPA1, short form; S-OPA1).

It is found in the mitochondrion inner membrane. Its subcellular location is the mitochondrion intermembrane space. The enzyme catalyses GTP + H2O = GDP + phosphate + H(+). In terms of biological role, dynamin-related GTPase that is essential for normal mitochondrial morphology by mediating fusion of the mitochondrial inner membranes, regulating cristae morphology and maintaining respiratory chain function. Exists in two forms: the transmembrane, long form (Dynamin-like GTPase OPA1, long form; L-OPA1), which is tethered to the inner mitochondrial membrane, and the short soluble form (Dynamin-like GTPase OPA1, short form; S-OPA1), which results from proteolytic cleavage and localizes in the intermembrane space. Both forms (L-OPA1 and S-OPA1) cooperate to catalyze the fusion of the mitochondrial inner membrane. The equilibrium between L-OPA1 and S-OPA1 is essential: excess levels of S-OPA1, produced by cleavage by OMA1 following loss of mitochondrial membrane potential, lead to an impaired equilibrium between L-OPA1 and S-OPA1, inhibiting mitochondrial fusion. The balance between L-OPA1 and S-OPA1 also influences cristae shape and morphology. Its role in mitochondrial morphology is required for mitochondrial genome maintenance. Its function is as follows. Constitutes the transmembrane long form (L-OPA1) that plays a central role in mitochondrial inner membrane fusion and cristae morphology. L-OPA1 and the soluble short form (S-OPA1) form higher-order helical assemblies that coordinate the fusion of mitochondrial inner membranes. Inner membrane-anchored L-OPA1 molecules initiate membrane remodeling by recruiting soluble S-OPA1 to rapidly polymerize into a flexible cylindrical scaffold encaging the mitochondrial inner membrane. Once at the membrane surface, the formation of S-OPA1 helices induce bilayer curvature. OPA1 dimerization through the paddle region, which inserts into cardiolipin-containing membrane, promotes GTP hydrolysis and the helical assembly of a flexible OPA1 lattice on the membrane, which drives membrane curvature and mitochondrial fusion. Plays a role in the maintenance and remodeling of mitochondrial cristae, some invaginations of the mitochondrial inner membrane that provide an increase in the surface area. Probably acts by forming helical filaments at the inside of inner membrane tubes with the shape and dimensions of crista junctions. Constitutes the soluble short form (S-OPA1) generated by cleavage by OMA1, which plays a central role in mitochondrial inner membrane fusion and cristae morphology. The transmembrane long form (L-OPA1) and the S-OPA1 form higher-order helical assemblies that coordinate the fusion of mitochondrial inner membranes. Inner membrane-anchored L-OPA1 molecules initiate membrane remodeling by recruiting soluble S-OPA1 to rapidly polymerize into a flexible cylindrical scaffold encaging the mitochondrial inner membrane. Once at the membrane surface, the formation of S-OPA1 helices induce bilayer curvature. OPA1 dimerization through the paddle region, which inserts into cardiolipin-containing membrane, promotes GTP hydrolysis and the helical assembly of a flexible OPA1 lattice on the membrane, which drives membrane curvature and mitochondrial fusion. Excess levels of S-OPA1 produced by cleavage by OMA1 following stress conditions that induce loss of mitochondrial membrane potential, lead to an impaired equilibrium between L-OPA1 and S-OPA1, thereby inhibiting mitochondrial fusion. Plays a role in the maintenance and remodeling of mitochondrial cristae, some invaginations of the mitochondrial inner membrane that provide an increase in the surface area. Probably acts by forming helical filaments at the inside of inner membrane tubes with the shape and dimensions of crista junctions. In Danio rerio (Zebrafish), this protein is Dynamin-like GTPase OPA1, mitochondrial.